The following is a 353-amino-acid chain: Cellulose-complementing protein (353 aa).

Disordered stretches follow at residues 1 to 21, 75 to 94, and 117 to 337; these read MSASGSDEVAGGGQAGSPQDF, PQIAVAPPPPPVVPDPPAIV, and AVPA…SPRP. Residues 80–91 show a composition bias toward pro residues; it reads APPPPPVVPDPP. 2 stretches are compositionally biased toward low complexity: residues 117–132 and 142–164; these read AVPAEPPVQEAPVQAA and IAEQAPPAAPDPASVPYANVAAA. A compositionally biased stretch (pro residues) spans 165 to 175; the sequence is PVPPDPAPVTP. 2 stretches are compositionally biased toward polar residues: residues 196 to 226 and 278 to 304; these read QVRTVQEGATPSRVPSRSMNAFPRTSASSIS and STRSVRSNVSRMTSMTKTDTNSSQASR.

The chain is Cellulose-complementing protein (ccpAX) from Komagataeibacter xylinus (Gluconacetobacter xylinus).